The sequence spans 113 residues: MTMEAKAILRTARISPQKARLVADQVRGLPAERAVNLLKFSDKKAAHLIKKVVESAIANAENNQGADVDELKVQTIMVDEGPTLKRFMARAKGRGTRILKRTSHITVVVGAAK.

Belongs to the universal ribosomal protein uL22 family. As to quaternary structure, part of the 50S ribosomal subunit.

In terms of biological role, this protein binds specifically to 23S rRNA; its binding is stimulated by other ribosomal proteins, e.g. L4, L17, and L20. It is important during the early stages of 50S assembly. It makes multiple contacts with different domains of the 23S rRNA in the assembled 50S subunit and ribosome. Functionally, the globular domain of the protein is located near the polypeptide exit tunnel on the outside of the subunit, while an extended beta-hairpin is found that lines the wall of the exit tunnel in the center of the 70S ribosome. In Stenotrophomonas maltophilia (strain K279a), this protein is Large ribosomal subunit protein uL22.